Consider the following 176-residue polypeptide: ATP synthase subunit b (176 aa).

Residues 24–43 (FAFRVVNFVIFAGIIWKAAG) traverse the membrane as a helical segment.

This sequence belongs to the ATPase B chain family. As to quaternary structure, F-type ATPases have 2 components, F(1) - the catalytic core - and F(0) - the membrane proton channel. F(1) has five subunits: alpha(3), beta(3), gamma(1), delta(1), epsilon(1). F(0) has three main subunits: a(1), b(2) and c(10-14). The alpha and beta chains form an alternating ring which encloses part of the gamma chain. F(1) is attached to F(0) by a central stalk formed by the gamma and epsilon chains, while a peripheral stalk is formed by the delta and b chains.

The protein localises to the cell inner membrane. In terms of biological role, f(1)F(0) ATP synthase produces ATP from ADP in the presence of a proton or sodium gradient. F-type ATPases consist of two structural domains, F(1) containing the extramembraneous catalytic core and F(0) containing the membrane proton channel, linked together by a central stalk and a peripheral stalk. During catalysis, ATP synthesis in the catalytic domain of F(1) is coupled via a rotary mechanism of the central stalk subunits to proton translocation. Its function is as follows. Component of the F(0) channel, it forms part of the peripheral stalk, linking F(1) to F(0). This is ATP synthase subunit b from Nitratidesulfovibrio vulgaris (strain ATCC 29579 / DSM 644 / CCUG 34227 / NCIMB 8303 / VKM B-1760 / Hildenborough) (Desulfovibrio vulgaris).